Consider the following 214-residue polypeptide: Phosphatidylserine decarboxylase proenzyme (214 aa).

Ser-182 serves as the catalytic Schiff-base intermediate with substrate; via pyruvic acid. Ser-182 bears the Pyruvic acid (Ser); by autocatalysis mark.

This sequence belongs to the phosphatidylserine decarboxylase family. PSD-A subfamily. In terms of assembly, heterodimer of a large membrane-associated beta subunit and a small pyruvoyl-containing alpha subunit. Pyruvate serves as cofactor. Is synthesized initially as an inactive proenzyme. Formation of the active enzyme involves a self-maturation process in which the active site pyruvoyl group is generated from an internal serine residue via an autocatalytic post-translational modification. Two non-identical subunits are generated from the proenzyme in this reaction, and the pyruvate is formed at the N-terminus of the alpha chain, which is derived from the carboxyl end of the proenzyme. The post-translation cleavage follows an unusual pathway, termed non-hydrolytic serinolysis, in which the side chain hydroxyl group of the serine supplies its oxygen atom to form the C-terminus of the beta chain, while the remainder of the serine residue undergoes an oxidative deamination to produce ammonia and the pyruvoyl prosthetic group on the alpha chain.

It localises to the cell membrane. The enzyme catalyses a 1,2-diacyl-sn-glycero-3-phospho-L-serine + H(+) = a 1,2-diacyl-sn-glycero-3-phosphoethanolamine + CO2. It participates in phospholipid metabolism; phosphatidylethanolamine biosynthesis; phosphatidylethanolamine from CDP-diacylglycerol: step 2/2. Functionally, catalyzes the formation of phosphatidylethanolamine (PtdEtn) from phosphatidylserine (PtdSer). The protein is Phosphatidylserine decarboxylase proenzyme of Burkholderia cenocepacia (strain HI2424).